Reading from the N-terminus, the 345-residue chain is Splicing factor YJU2 (345 aa).

4 residues coordinate Zn(2+): cysteine 43, cysteine 46, cysteine 80, and cysteine 83. The tract at residues 205–345 is disordered; sequence KRLRDSDSEE…YSDSDDSSSD (141 aa). A compositionally biased stretch (basic and acidic residues) spans 217–232; sequence ENAKERSKKHIADKPT. Low complexity-rich tracts occupy residues 308 to 317 and 327 to 337; these read SSITSSSASS and GSSLGLLGAYS.

Belongs to the CWC16 family. YJU2 subfamily. In terms of assembly, component of the spliceosome. Present in the activated B complex, the catalytically activated B* complex which catalyzes the branching, the catalytic step 1 C complex catalyzing the exon ligation, and the postcatalytic P complex containing the ligated exons (mRNA) and the excised lariat intron.

It is found in the nucleus. Functionally, part of the spliceosome which catalyzes two sequential transesterification reactions, first the excision of the non-coding intron from pre-mRNA and then the ligation of the coding exons to form the mature mRNA. Plays a role in stabilizing the structure of the spliceosome catalytic core and docking of the branch helix into the active site, producing 5'-exon and lariat intron-3'-intermediates. May protect cells from TP53-dependent apoptosis upon dsDNA break damage through association with PRP19-CD5L complex. The polypeptide is Splicing factor YJU2 (Danio rerio (Zebrafish)).